Reading from the N-terminus, the 197-residue chain is MFLYEKNFDLQKKKALESLNDALEKGLVDSDIISLLNKINSLKNYFTTSSCSGRISIMQMPDLGDKLNAIWLGKWHREVKIEEVLDTINKHDGGMLWFMVHSPILHVSAKTLEDAVELLNLAMACGFKHSNIKSVSHKKLVVEIRSTERMDIPLGSDGELWVNESYLVKIVSMANLQLRRTKEKLRKLEDEIQKLKK.

This sequence belongs to the TYW3 family.

The catalysed reaction is 4-demethyl-7-[(3S)-3-amino-3-carboxypropyl]wyosine(37) in tRNA(Phe) + S-adenosyl-L-methionine = 7-[(3S)-3-amino-3-carboxypropyl]wyosine(37) in tRNA(Phe) + S-adenosyl-L-homocysteine + H(+). Its function is as follows. S-adenosyl-L-methionine-dependent methyltransferase that acts as a component of the wyosine derivatives biosynthesis pathway. Probably methylates N-4 position of wybutosine-86 to produce wybutosine-72. The polypeptide is tRNA(Phe) 7-((3-amino-3-carboxypropyl)-4-demethylwyosine(37)-N(4))-methyltransferase (Thermococcus sibiricus (strain DSM 12597 / MM 739)).